Reading from the N-terminus, the 117-residue chain is Fluoride-specific ion channel FluC 2 (117 aa).

2 helical membrane passes run 1–21 (MISI…RSAI) and 46–66 (FLIG…AFFV). Na(+) contacts are provided by G71 and T74. A helical transmembrane segment spans residues 95–115 (LFLNYSLLQFIIGFIACYIGY).

This sequence belongs to the fluoride channel Fluc/FEX (TC 1.A.43) family.

Its subcellular location is the cell membrane. The catalysed reaction is fluoride(in) = fluoride(out). Na(+) is not transported, but it plays an essential structural role and its presence is essential for fluoride channel function. Its function is as follows. Fluoride-specific ion channel. Important for reducing fluoride concentration in the cell, thus reducing its toxicity. The sequence is that of Fluoride-specific ion channel FluC 2 from Staphylococcus aureus (strain NCTC 8325 / PS 47).